The primary structure comprises 136 residues: Probable flagellum biosynthesis repressor protein FlbT 2 (136 aa).

Belongs to the FlbT family.

Its function is as follows. Has a post-transcriptional repressor function in flagellum biogenesis. Associates with the 5'-UTR of fljK mRNA and promotes its degradation. This is Probable flagellum biosynthesis repressor protein FlbT 2 from Bradyrhizobium diazoefficiens (strain JCM 10833 / BCRC 13528 / IAM 13628 / NBRC 14792 / USDA 110).